The primary structure comprises 742 residues: MSGIQFDVSRLCAATISIQGRHFVDSHGRVLHLRGANVSAASKVPATPAPKIHDHAQASYVGRPFRLEEADEHWARLKSWGLTFVRITVTWEALEHKERGVYDEDYLAYLRALLQSMEPYGLVAYIALHQDVWSRYCGGSGAPGWTLEAAGFDLSNEGENLSLSGAAFLDGIKSGRLAGERGLWPTGYQKLAAATMNTLFWGGETFAPLLKVPGQIDGKWVSRNIQVYLQEAFLAATAKLVKAVGDLETVMGFELMNEPHPGFIGIQSIHEWDYTTDLHLGQFPSPLQSFSMGAGHPTPNVPVYTRSFPFPTRVTSHVTANPEGACAWASKECPWEKHGVWRWSEAKQEAAALQQDYFVKNRDGGKVDFYEDFYFPFVRKWEQVIGENISSTKGLKARMVEAIPNELCPEWKEESRPKNMVYAPHWYDLNTLFKKKFGFMSVNVQGLARGMFILRALYFGTAAAKANYALQIKTIVLAARLKLGPVPVIFGECGVPMDINNEEAFRTGDWKWQERSMDALISAMEGALMGFNLWTYNPANRDDIGDDWNAENFSWYSESNRTKLLKNAEKSSDGLDVGARLLNVIVRPYPIATAGNPTSLAYDANACAFTYRFRSPLRVSAAAPTPEEYTEIFLPRRVFRKESTEWTVTAGGKVHVDWERERVFVWFEDSSLTAASIKDDTRPRRIDIWVIGRKVEENWSIAQILVAVVILLLGVLVAYYAQLYEWEKDKMIFQHLREANGM.

N-linked (GlcNAc...) asparagine glycosylation is found at Asn37 and Asn160. Glu258 (proton donor) is an active-site residue. An N-linked (GlcNAc...) asparagine glycan is attached at Asn388. The active-site Nucleophile is Glu492. N-linked (GlcNAc...) asparagine glycosylation is found at Asn552, Asn560, and Asn698. The helical transmembrane segment at 701–721 (IAQILVAVVILLLGVLVAYYA) threads the bilayer.

It belongs to the glycosyl hydrolase 5 (cellulase A) family.

The protein resides in the membrane. The catalysed reaction is a beta-D-glucosyl-(1&lt;-&gt;1')-N-acylsphing-4-enine + H2O = an N-acylsphing-4-enine + D-glucose. Functionally, specifically hydrolyzes the glucosidic linkage in glucosylceramide. May prevent accumulation of aberrent glucosylceramide containing immature ceramide. In Cryptococcus neoformans var. grubii serotype A (strain H99 / ATCC 208821 / CBS 10515 / FGSC 9487) (Filobasidiella neoformans var. grubii), this protein is Glucosylceramidase.